Reading from the N-terminus, the 162-residue chain is Heat shock protein beta-6 (162 aa).

Residues 1-72 (MEIRVPVQPS…PTAQVPTDPG (72 aa)) form an involved in stabilization of the HSPB1:HSBP6 heterodimer region. At Ser16 the chain carries Phosphoserine. An Isoglutamyl lysine isopeptide (Gln-Lys) (interchain with K-162) cross-link involves residue Gln31. One can recognise a sHSP domain in the interval 56–162 (RAPSVALPTA…ASLPSPPAAK (107 aa)). Gln66 carries the deamidated glutamine modification. The residue at position 157 (Ser157) is a Phosphoserine. Lys162 participates in a covalent cross-link: Isoglutamyl lysine isopeptide (Lys-Gln) (interchain with Q-31).

It belongs to the small heat shock protein (HSP20) family. Homodimer. Small heat shock proteins form high molecular mass oligomers containing variable number of monomers; these oligomers display a very flexible quaternary structure easily exchanging their subunits. Heterooligomer with HSPB1; formed through oligomerization of HSPB1:HSBP6 dimers; subunit exchange leads to formation of at least two different heterooligomeric complexes, differing in variable quantities of HSPB1 and HSPB6 homodimers in addition to HSPB1:HSPB6 heterodimers. Heterooligomer with CRYAB; large heterooligomers consist of CRYAB homodimers and HSPB5:HSPB6 heterodimers but lacking HSPB6 homodimers. Interacts with BAG3. Interacts (phosphorylated) with YWHAZ. Interacts with PDE4A and PDE4D; required for maintenance of the non-phosphorylated state of HSPB6 under basal conditions. Interacts with KDR. Interacts with PRKD1. The N-terminus is blocked. In terms of processing, phosphorylated at Ser-16 by PKA and probably PKD1K; required to protect cardiomyocytes from apoptosis. In terms of tissue distribution, widely expressed. High expression in muscle tissues.

It localises to the cytoplasm. It is found in the nucleus. The protein localises to the secreted. In terms of biological role, small heat shock protein which functions as a molecular chaperone probably maintaining denatured proteins in a folding-competent state. Seems to have versatile functions in various biological processes. Plays a role in regulating muscle function such as smooth muscle vasorelaxation and cardiac myocyte contractility. May regulate myocardial angiogenesis implicating KDR. Overexpression mediates cardioprotection and angiogenesis after induced damage. Stabilizes monomeric YWHAZ thereby supporting YWHAZ chaperone-like activity. This Rattus norvegicus (Rat) protein is Heat shock protein beta-6 (Hspb6).